The following is a 472-amino-acid chain: Alanine--anticapsin ligase (472 aa).

A Mg(2+)-binding site is contributed by Glu-109. 2 residues coordinate ATP: Lys-138 and Lys-178. The 214-residue stretch at 142-355 (RAAFNRAGVK…MAQLLLDVLC (214 aa)) folds into the ATP-grasp domain. Leu-182 serves as a coordination point for Mg(2+). Residues 184–185 (SS), 226–229 (EEFL), and Gln-268 each bind ATP. Residues Glu-273 and 309 to 311 (HTE) each bind substrate. Residues Glu-311 and Glu-324 each coordinate Mg(2+). 328–331 (RFAG) lines the substrate pocket.

In terms of assembly, monomer or homodimer. Requires Mg(2+) as cofactor.

The enzyme catalyses L-anticapsin + L-alanine + ATP = bacilysin + ADP + phosphate + H(+). It functions in the pathway antibiotic biosynthesis; bacilysin biosynthesis. Its function is as follows. Part of the bacABCDEFG operon responsible for the biosynthesis of bacilysin, an irreversible inactivator of the glutaminase domain of glucosamine synthetase. Catalyzes the formation of alpha-dipeptides from various L-amino acids in the presence of ATP. In vivo catalyzes the ligation of L-alanine and L-anticapsin (epoxycyclohexanonyl-Ala) to produce the final bacilysin antibiotic (L-Ala-L-4S-cyclohexenonyl-Ala dipeptide). This Bacillus subtilis protein is Alanine--anticapsin ligase.